Reading from the N-terminus, the 688-residue chain is UvrABC system protein B (688 aa).

The region spanning 31 to 414 is the Helicase ATP-binding domain; sequence GRITAGETDV…LGIADGVVEQ (384 aa). ATP is bound at residue 44 to 51; sequence GATGTGKS. The Beta-hairpin signature appears at 97 to 120; sequence YYDYYQPEAYVPQTDTFIEKDSSI. The region spanning 434-600 is the Helicase C-terminal domain; sequence QIDDLLEEIR…PLRKRIADIT (167 aa). The disordered stretch occupies residues 614–633; sequence LAGRDQKRKSPTPSLRSGGI. Residues 642–677 form the UVR domain; sequence ESLIADLNAQMLAAAGELKFELAARLRDELSDLKRD.

This sequence belongs to the UvrB family. Forms a heterotetramer with UvrA during the search for lesions. Interacts with UvrC in an incision complex.

It is found in the cytoplasm. In terms of biological role, the UvrABC repair system catalyzes the recognition and processing of DNA lesions. A damage recognition complex composed of 2 UvrA and 2 UvrB subunits scans DNA for abnormalities. Upon binding of the UvrA(2)B(2) complex to a putative damaged site, the DNA wraps around one UvrB monomer. DNA wrap is dependent on ATP binding by UvrB and probably causes local melting of the DNA helix, facilitating insertion of UvrB beta-hairpin between the DNA strands. Then UvrB probes one DNA strand for the presence of a lesion. If a lesion is found the UvrA subunits dissociate and the UvrB-DNA preincision complex is formed. This complex is subsequently bound by UvrC and the second UvrB is released. If no lesion is found, the DNA wraps around the other UvrB subunit that will check the other stand for damage. In Leifsonia xyli subsp. xyli (strain CTCB07), this protein is UvrABC system protein B.